Here is a 115-residue protein sequence, read N- to C-terminus: SOSS complex subunit C homolog (115 aa).

This sequence belongs to the SOSS-C family.

The protein is SOSS complex subunit C homolog of Drosophila mojavensis (Fruit fly).